A 168-amino-acid chain; its full sequence is N-alpha-acetyltransferase (168 aa).

The region spanning 13–168 (YQIRLATLSD…EDAYLMAAPL (156 aa)) is the N-acetyltransferase domain. Residue Tyr38 coordinates substrate. His89 lines the Zn(2+) pocket. Acetyl-CoA is bound by residues 93–95 (IAV) and 101–106 (KIGVGT). Residues 93–95 (IAV) and 101–106 (KIGVGT) contribute to the CoA site. Glu128 lines the Zn(2+) pocket. Acetyl-CoA contacts are provided by residues Asn133 and 140–142 (YKK). Asn133 provides a ligand contact to CoA. Residue Tyr155 coordinates substrate.

The protein belongs to the acetyltransferase family. ARD1 subfamily. As to quaternary structure, homodimer.

It is found in the cytoplasm. It catalyses the reaction N-terminal L-alanyl-[protein] + acetyl-CoA = N-terminal N(alpha)-acetyl-L-alanyl-[protein] + CoA + H(+). It carries out the reaction N-terminal L-seryl-[protein] + acetyl-CoA = N-terminal N(alpha)-acetyl-L-seryl-[protein] + CoA + H(+). The catalysed reaction is N-terminal L-methionyl-L-leucyl-[protein] + acetyl-CoA = N-terminal N(alpha)-acetyl-L-methionyl-L-leucyl-[protein] + CoA + H(+). The enzyme catalyses N-terminal L-methionyl-L-glutamyl-[protein] + acetyl-CoA = N-terminal N(alpha)-acetyl-L-methionyl-L-glutamyl-[protein] + CoA + H(+). Functionally, displays alpha (N-terminal) acetyltransferase activity. Catalyzes the covalent attachment of an acetyl moiety from acetyl-CoA to the free alpha-amino group at the N-terminus of a protein. The chain is N-alpha-acetyltransferase from Sulfolobus acidocaldarius (strain ATCC 33909 / DSM 639 / JCM 8929 / NBRC 15157 / NCIMB 11770).